A 337-amino-acid polypeptide reads, in one-letter code: Heat-inducible transcription repressor HrcA (337 aa).

This sequence belongs to the HrcA family.

In terms of biological role, negative regulator of class I heat shock genes (grpE-dnaK-dnaJ and groELS operons). Prevents heat-shock induction of these operons. The sequence is that of Heat-inducible transcription repressor HrcA from Arthrobacter sp. (strain FB24).